Here is a 197-residue protein sequence, read N- to C-terminus: Carbohydrate-binding domain-containing protein C2E1P3.05c (197 aa).

The N-terminal stretch at 1-23 (MLTQSLFLTVLTLALSLVSKTSA) is a signal peptide. CBM1 domains are found at residues 25–61 (QCSP…SQCI) and 68–104 (PCAK…SQCI). Disulfide bonds link cysteine 33–cysteine 50, cysteine 44–cysteine 60, cysteine 76–cysteine 93, and cysteine 87–cysteine 103. The disordered stretch occupies residues 115–163 (SSAASSTTSTTSSSSLVSSTTLTSSSPSAVSSTTSIPSISSTISSSVST). Asparagine 182 and asparagine 193 each carry an N-linked (GlcNAc...) asparagine glycan.

Its subcellular location is the secreted. The polypeptide is Carbohydrate-binding domain-containing protein C2E1P3.05c (Schizosaccharomyces pombe (strain 972 / ATCC 24843) (Fission yeast)).